We begin with the raw amino-acid sequence, 284 residues long: Extracellular metalloprotease VDBG_01143 (284 aa).

A signal peptide spans methionine 1–glycine 18. Residue asparagine 58 is glycosylated (N-linked (GlcNAc...) asparagine). A Zn(2+)-binding site is contributed by histidine 200. Glutamate 201 is an active-site residue. Histidine 204 provides a ligand contact to Zn(2+). A disulfide bridge connects residues cysteine 236 and cysteine 263.

This sequence belongs to the peptidase M43B family.

Its subcellular location is the secreted. Its function is as follows. Secreted metalloproteinase that allows assimilation of proteinaceous substrates. The chain is Extracellular metalloprotease VDBG_01143 from Verticillium alfalfae (strain VaMs.102 / ATCC MYA-4576 / FGSC 10136) (Verticillium wilt of alfalfa).